A 465-amino-acid polypeptide reads, in one-letter code: Kynureninase (465 aa).

Pyridoxal 5'-phosphate-binding positions include Leu-116, Thr-117, 144–147, Asp-231, His-234, and Tyr-256; that span reads FPSD. Lys-257 is subject to N6-(pyridoxal phosphate)lysine. Trp-291 and Asn-319 together coordinate pyridoxal 5'-phosphate.

It belongs to the kynureninase family. In terms of assembly, homodimer. Pyridoxal 5'-phosphate serves as cofactor.

The protein resides in the cytoplasm. It catalyses the reaction L-kynurenine + H2O = anthranilate + L-alanine + H(+). The enzyme catalyses 3-hydroxy-L-kynurenine + H2O = 3-hydroxyanthranilate + L-alanine + H(+). The protein operates within amino-acid degradation; L-kynurenine degradation; L-alanine and anthranilate from L-kynurenine: step 1/1. It functions in the pathway cofactor biosynthesis; NAD(+) biosynthesis; quinolinate from L-kynurenine: step 2/3. Its function is as follows. Catalyzes the cleavage of L-kynurenine (L-Kyn) and L-3-hydroxykynurenine (L-3OHKyn) into anthranilic acid (AA) and 3-hydroxyanthranilic acid (3-OHAA), respectively. This Scheffersomyces stipitis (strain ATCC 58785 / CBS 6054 / NBRC 10063 / NRRL Y-11545) (Yeast) protein is Kynureninase.